The following is a 271-amino-acid chain: Aliphatic sulfonates import ATP-binding protein SsuB (271 aa).

One can recognise an ABC transporter domain in the interval 13–234 (ITLESIGKRY…RKGSAKLAAL (222 aa)). Residue 45-52 (GRSGCGKS) participates in ATP binding. The segment at 250 to 271 (EASRQGIKASRQGTATSRRVAN) is disordered. Residues 260–271 (RQGTATSRRVAN) show a composition bias toward polar residues.

It belongs to the ABC transporter superfamily. Aliphatic sulfonates importer (TC 3.A.1.17.2) family. In terms of assembly, the complex is composed of two ATP-binding proteins (SsuB), two transmembrane proteins (SsuC) and a solute-binding protein (SsuA).

It is found in the cell inner membrane. The catalysed reaction is ATP + H2O + aliphatic sulfonate-[sulfonate-binding protein]Side 1 = ADP + phosphate + aliphatic sulfonateSide 2 + [sulfonate-binding protein]Side 1.. In terms of biological role, part of the ABC transporter complex SsuABC involved in aliphatic sulfonates import. Responsible for energy coupling to the transport system. This chain is Aliphatic sulfonates import ATP-binding protein SsuB, found in Yersinia pestis bv. Antiqua (strain Antiqua).